We begin with the raw amino-acid sequence, 149 residues long: Nucleoside diphosphate kinase (149 aa).

ATP is bound by residues K9, F57, R85, T91, R102, and N112. The Pros-phosphohistidine intermediate role is filled by H115.

Belongs to the NDK family. In terms of assembly, homotetramer. The cofactor is Mg(2+).

Its subcellular location is the cytoplasm. The enzyme catalyses a 2'-deoxyribonucleoside 5'-diphosphate + ATP = a 2'-deoxyribonucleoside 5'-triphosphate + ADP. The catalysed reaction is a ribonucleoside 5'-diphosphate + ATP = a ribonucleoside 5'-triphosphate + ADP. Its function is as follows. Major role in the synthesis of nucleoside triphosphates other than ATP. The ATP gamma phosphate is transferred to the NDP beta phosphate via a ping-pong mechanism, using a phosphorylated active-site intermediate. The protein is Nucleoside diphosphate kinase of Thermomicrobium roseum (strain ATCC 27502 / DSM 5159 / P-2).